Consider the following 362-residue polypeptide: Chorismate synthase (362 aa).

Residue Arg47 coordinates NADP(+). FMN contacts are provided by residues 124–126 (RAS), Gly286, 301–305 (KPTAT), and Arg327.

The protein belongs to the chorismate synthase family. In terms of assembly, homotetramer. The cofactor is FMNH2.

The catalysed reaction is 5-O-(1-carboxyvinyl)-3-phosphoshikimate = chorismate + phosphate. It participates in metabolic intermediate biosynthesis; chorismate biosynthesis; chorismate from D-erythrose 4-phosphate and phosphoenolpyruvate: step 7/7. In terms of biological role, catalyzes the anti-1,4-elimination of the C-3 phosphate and the C-6 proR hydrogen from 5-enolpyruvylshikimate-3-phosphate (EPSP) to yield chorismate, which is the branch point compound that serves as the starting substrate for the three terminal pathways of aromatic amino acid biosynthesis. This reaction introduces a second double bond into the aromatic ring system. This chain is Chorismate synthase, found in Synechococcus sp. (strain WH7803).